Reading from the N-terminus, the 303-residue chain is Monoglyceride lipase (303 aa).

The residue at position 10 (Thr-10) is a Phosphothreonine. Tyr-58 is modified (3'-nitrotyrosine). Ser-122 (nucleophile) is an active-site residue. At Ser-189 the chain carries Phosphoserine. Catalysis depends on charge relay system residues Asp-239 and His-269.

This sequence belongs to the AB hydrolase superfamily. Monoacylglycerol lipase family. Homodimer. As to expression, ubiquitous. Highly expressed in adipose tissue, adrenal gland, ovary, heart, spleen, lung, skeletal muscle, kidney and testis. Highly expressed throughout the brain.

The protein localises to the cytoplasm. The protein resides in the cytosol. It is found in the membrane. The enzyme catalyses Hydrolyzes glycerol monoesters of long-chain fatty acids.. It catalyses the reaction a 1-acylglycerol + H2O = glycerol + a fatty acid + H(+). It carries out the reaction a 2-acylglycerol + H2O = glycerol + a fatty acid + H(+). The catalysed reaction is 1-octanoylglycerol + H2O = octanoate + glycerol + H(+). The enzyme catalyses 2-(5Z,8Z,11Z,14Z-eicosatetraenoyl)-glycerol + H2O = glycerol + (5Z,8Z,11Z,14Z)-eicosatetraenoate + H(+). It catalyses the reaction 1-decanoylglycerol + H2O = decanoate + glycerol + H(+). It carries out the reaction 1-dodecanoylglycerol + H2O = dodecanoate + glycerol + H(+). The catalysed reaction is 1-tetradecanoylglycerol + H2O = tetradecanoate + glycerol + H(+). The enzyme catalyses 2-hexadecanoylglycerol + H2O = glycerol + hexadecanoate + H(+). It catalyses the reaction 1-(9Z-octadecenoyl)-glycerol + H2O = glycerol + (9Z)-octadecenoate + H(+). It carries out the reaction 2-(9Z-octadecenoyl)-glycerol + H2O = glycerol + (9Z)-octadecenoate + H(+). The catalysed reaction is 2-(9Z,12Z-octadecadienoyl)-glycerol + H2O = (9Z,12Z)-octadecadienoate + glycerol + H(+). The enzyme catalyses 1-(5Z,8Z,11Z,14Z-eicosatetraenoyl)-glycerol + H2O = glycerol + (5Z,8Z,11Z,14Z)-eicosatetraenoate + H(+). It catalyses the reaction 1-(9Z,12Z-octadecadienoyl)-glycerol + H2O = (9Z,12Z)-octadecadienoate + glycerol + H(+). It carries out the reaction 1-hexadecanoylglycerol + H2O = glycerol + hexadecanoate + H(+). The catalysed reaction is 1-octadecanoylglycerol + H2O = octadecanoate + glycerol + H(+). The enzyme catalyses prostaglandin E2 1-glyceryl ester + H2O = prostaglandin E2 + glycerol + H(+). It catalyses the reaction prostaglandin D2-1-glycerol ester + H2O = prostaglandin D2 + glycerol + H(+). It carries out the reaction 2-glyceryl-15-deoxy-Delta(12,14)-prostaglandin J2 + H2O = 15-deoxy-Delta(12,14)-prostaglandin J2 + glycerol + H(+). The catalysed reaction is prostaglandin F2alpha 1-glyceryl ester + H2O = prostaglandin F2alpha + glycerol + H(+). It functions in the pathway glycerolipid metabolism; triacylglycerol degradation. Functionally, converts monoacylglycerides to free fatty acids and glycerol. Hydrolyzes the endocannabinoid 2-arachidonoylglycerol, and thereby contributes to the regulation of endocannabinoid signaling, nociperception and perception of pain. Regulates the levels of fatty acids that serve as signaling molecules and promote cancer cell migration, invasion and tumor growth. The chain is Monoglyceride lipase from Rattus norvegicus (Rat).